The following is a 240-amino-acid chain: 1-(5-phosphoribosyl)-5-[(5-phosphoribosylamino)methylideneamino] imidazole-4-carboxamide isomerase (240 aa).

The Proton acceptor role is filled by aspartate 8. Aspartate 129 acts as the Proton donor in catalysis.

This sequence belongs to the HisA/HisF family.

The protein resides in the cytoplasm. The catalysed reaction is 1-(5-phospho-beta-D-ribosyl)-5-[(5-phospho-beta-D-ribosylamino)methylideneamino]imidazole-4-carboxamide = 5-[(5-phospho-1-deoxy-D-ribulos-1-ylimino)methylamino]-1-(5-phospho-beta-D-ribosyl)imidazole-4-carboxamide. It functions in the pathway amino-acid biosynthesis; L-histidine biosynthesis; L-histidine from 5-phospho-alpha-D-ribose 1-diphosphate: step 4/9. This chain is 1-(5-phosphoribosyl)-5-[(5-phosphoribosylamino)methylideneamino] imidazole-4-carboxamide isomerase, found in Listeria welshimeri serovar 6b (strain ATCC 35897 / DSM 20650 / CCUG 15529 / CIP 8149 / NCTC 11857 / SLCC 5334 / V8).